Consider the following 313-residue polypeptide: WD repeat-containing protein 82-B (313 aa).

WD repeat units follow at residues 19–58 (ENSD…PKRT), 105–144 (GHSK…CQGL), 146–184 (HLQG…KGPF), 192–231 (DRTC…VMHT), 236–276 (NNSK…KVAV), and 280–313 (KHTG…TIDD).

Belongs to the WD repeat SWD2 family. Component of the SET1/COMPASS complex. Component of the PNUTS-PP1 phosphatase complex.

Its subcellular location is the nucleus. The protein localises to the chromosome. It localises to the cytoplasm. Functionally, regulatory component of the SET1/COMPASS complex implicated in the tethering of this complex to transcriptional start sites of active genes. Facilitates histone H3 'Lys-4' methylation (H3K4me) via recruitment of the SETD1A or SETD1B to the 'Ser-5' phosphorylated C-terminal domain (CTD) of RNA polymerase II large subunit (POLR2A). Component of the PNUTS-PP1 protein phosphatase complex, a protein phosphatase 1 (PP1) complex that promotes RNA polymerase II transcription pause-release, allowing transcription elongation. The protein is WD repeat-containing protein 82-B (wdr82-b) of Xenopus laevis (African clawed frog).